The sequence spans 395 residues: Putative 8-amino-7-oxononanoate synthase (395 aa).

Residue R23 participates in substrate binding. A pyridoxal 5'-phosphate-binding site is contributed by 110-111; sequence GY. H135 provides a ligand contact to substrate. Pyridoxal 5'-phosphate contacts are provided by residues S182, 207-210, and 239-242; these read DEAH and TFSK. K242 carries the post-translational modification N6-(pyridoxal phosphate)lysine. T356 is a substrate binding site.

This sequence belongs to the class-II pyridoxal-phosphate-dependent aminotransferase family. BioF subfamily. In terms of assembly, homodimer. It depends on pyridoxal 5'-phosphate as a cofactor.

It catalyses the reaction 6-carboxyhexanoyl-[ACP] + L-alanine + H(+) = (8S)-8-amino-7-oxononanoate + holo-[ACP] + CO2. It participates in cofactor biosynthesis; biotin biosynthesis. In terms of biological role, catalyzes the decarboxylative condensation of pimeloyl-[acyl-carrier protein] and L-alanine to produce 8-amino-7-oxononanoate (AON), [acyl-carrier protein], and carbon dioxide. In Bacillus cereus (strain ATCC 10987 / NRS 248), this protein is Putative 8-amino-7-oxononanoate synthase (bioF).